We begin with the raw amino-acid sequence, 448 residues long: Ribulose bisphosphate carboxylase large chain (448 aa).

Position 4 is an N6,N6,N6-trimethyllysine (K4). N113 and T163 together coordinate substrate. Catalysis depends on K165, which acts as the Proton acceptor. K167 lines the substrate pocket. Residues K191, D193, and E194 each contribute to the Mg(2+) site. At K191 the chain carries N6-carboxylysine. H284 serves as the catalytic Proton acceptor. Substrate contacts are provided by R285, H317, and S369.

Belongs to the RuBisCO large chain family. Type I subfamily. As to quaternary structure, heterohexadecamer of 8 large chains and 8 small chains; disulfide-linked. The disulfide link is formed within the large subunit homodimers. Mg(2+) serves as cofactor. In terms of processing, the disulfide bond which can form in the large chain dimeric partners within the hexadecamer appears to be associated with oxidative stress and protein turnover.

The protein resides in the plastid. Its subcellular location is the chloroplast. The enzyme catalyses 2 (2R)-3-phosphoglycerate + 2 H(+) = D-ribulose 1,5-bisphosphate + CO2 + H2O. The catalysed reaction is D-ribulose 1,5-bisphosphate + O2 = 2-phosphoglycolate + (2R)-3-phosphoglycerate + 2 H(+). RuBisCO catalyzes two reactions: the carboxylation of D-ribulose 1,5-bisphosphate, the primary event in carbon dioxide fixation, as well as the oxidative fragmentation of the pentose substrate in the photorespiration process. Both reactions occur simultaneously and in competition at the same active site. This is Ribulose bisphosphate carboxylase large chain from Eucryphia lucida (Leatherwood).